The following is a 942-amino-acid chain: Homeobox protein 2 (942 aa).

Low complexity-rich tracts occupy residues 32–87 (ECNE…NINE) and 98–130 (SPYS…SPIP). 4 disordered regions span residues 32-149 (ECNE…PQNI), 161-494 (LESP…RLKK), 537-580 (RQEK…QGGA), and 609-942 (FKNN…CQQN). The span at 131–149 (NTNFKQSGEYQSIPSPQNI) shows a compositional bias: polar residues. Residues 163 to 261 (SPNSSNSSPS…PSSNLSKSNS (99 aa)) are compositionally biased toward low complexity. The span at 269-290 (QAPSNTSSPQLLSPNHNQQRIS) shows a compositional bias: polar residues. 2 stretches are compositionally biased toward low complexity: residues 299 to 430 (NNNH…NSSP) and 450 to 464 (NNNN…SNSS). Polar residues predominate over residues 465–481 (FDEYQPQQKVSRSNSPN). The homeobox DNA-binding region spans 485-544 (EKKRRTRLKKEQADILKTFFDNDDYPTKDDKETLANRLGMSYCAVTTWFSNKRQEKKRRG). Low complexity-rich tracts occupy residues 609-621 (FKNN…NKNV), 628-685 (NNNN…GSSD), 694-737 (NNNN…NNNN), 752-764 (NNNN…NNNN), 776-864 (SDDT…YLNN), and 890-927 (NNFN…NDNN). Positions 835-865 (NNNNNNNNQNNNNNNNNNQYNNNNKNYLNNI) form a coiled coil.

It localises to the nucleus. Functionally, putative transcription factor that may potentiate the function of warA. The chain is Homeobox protein 2 (hbx2) from Dictyostelium discoideum (Social amoeba).